Consider the following 328-residue polypeptide: uncharacterized protein (328 aa).

The H-T-H motif DNA-binding region spans 72–91; it reads ALQIRDKFNLQRVIIVPDGE.

Belongs to the SorC transcriptional regulatory family.

This is an uncharacterized protein from Escherichia coli (strain K12).